The sequence spans 151 residues: Small ribosomal subunit protein uS19 (151 aa).

It belongs to the universal ribosomal protein uS19 family.

In terms of biological role, protein S19 forms a complex with S13 that binds strongly to the 16S ribosomal RNA. This is Small ribosomal subunit protein uS19 from Picrophilus torridus (strain ATCC 700027 / DSM 9790 / JCM 10055 / NBRC 100828 / KAW 2/3).